Reading from the N-terminus, the 78-residue chain is Neurogranin (78 aa).

Residue Met1 is modified to N-acetylmethionine. Residues 26-49 form the IQ domain; that stretch reads ANAAAAKIQASFRGHMARKKIKSG. Ser36 carries the post-translational modification Phosphoserine; by PHK and PKC. A disordered region spans residues 38-78; it reads RGHMARKKIKSGERGRKGPGPGGPGGAGGARGGAGGGPSGD. The 29-residue stretch at 50-78 folds into the Collagen-like domain; it reads ERGRKGPGPGGPGGAGGARGGAGGGPSGD. The span at 55-78 shows a compositional bias: gly residues; it reads GPGPGGPGGAGGARGGAGGGPSGD. Arg68 carries the citrulline; partial modification. Position 68 is an omega-N-methylarginine (Arg68).

It belongs to the neurogranin family. Post-translationally, the N-terminus is blocked. Phosphorylated at Ser-36 by PHK and PKC. Phosphorylation prevents interaction with Calmodulin and interrupts several learning- and memory-associated functions. In terms of tissue distribution, is highly enriched in brain. Accumulates postsynaptically in dendritic spines of neostriatal neurons.

Acts as a 'third messenger' substrate of protein kinase C-mediated molecular cascades during synaptic development and remodeling. Binds to calmodulin in the absence of calcium. The polypeptide is Neurogranin (NRGN) (Bos taurus (Bovine)).